A 502-amino-acid chain; its full sequence is UDP-N-acetylmuramoylalanine--D-glutamate ligase (502 aa).

129–135 (GTNGKTT) provides a ligand contact to ATP. The tract at residues 288 to 307 (APDETTSRRRKRDGAHTPDI) is disordered.

The protein belongs to the MurCDEF family.

Its subcellular location is the cytoplasm. It catalyses the reaction UDP-N-acetyl-alpha-D-muramoyl-L-alanine + D-glutamate + ATP = UDP-N-acetyl-alpha-D-muramoyl-L-alanyl-D-glutamate + ADP + phosphate + H(+). The protein operates within cell wall biogenesis; peptidoglycan biosynthesis. Functionally, cell wall formation. Catalyzes the addition of glutamate to the nucleotide precursor UDP-N-acetylmuramoyl-L-alanine (UMA). The polypeptide is UDP-N-acetylmuramoylalanine--D-glutamate ligase (Burkholderia ambifaria (strain ATCC BAA-244 / DSM 16087 / CCUG 44356 / LMG 19182 / AMMD) (Burkholderia cepacia (strain AMMD))).